The sequence spans 448 residues: Probable glycine dehydrogenase (decarboxylating) subunit 1 (448 aa).

Belongs to the GcvP family. N-terminal subunit subfamily. The glycine cleavage system is composed of four proteins: P, T, L and H. In this organism, the P 'protein' is a heterodimer of two subunits.

It catalyses the reaction N(6)-[(R)-lipoyl]-L-lysyl-[glycine-cleavage complex H protein] + glycine + H(+) = N(6)-[(R)-S(8)-aminomethyldihydrolipoyl]-L-lysyl-[glycine-cleavage complex H protein] + CO2. Functionally, the glycine cleavage system catalyzes the degradation of glycine. The P protein binds the alpha-amino group of glycine through its pyridoxal phosphate cofactor; CO(2) is released and the remaining methylamine moiety is then transferred to the lipoamide cofactor of the H protein. The chain is Probable glycine dehydrogenase (decarboxylating) subunit 1 from Listeria monocytogenes serotype 4a (strain HCC23).